The sequence spans 60 residues: Temporin-CG1 (60 aa).

The signal sequence occupies residues 1–22 (MFTLKKSLLLLFFLATINLSLC). Residues 23-43 (EQERNAEEERRDDDERNAEVE) constitute a propeptide, removed in mature form.

Expressed by the skin glands.

The protein resides in the secreted. Its function is as follows. Antimicrobial peptide active against a variety of Gram-positive and some Gram-negative bacterial strains. Has antifungal activity against a slime mold isolate. Has weak hemolytic activity against human erythrocytes. This chain is Temporin-CG1, found in Amolops chunganensis (Chungan torrent frog).